The following is a 495-amino-acid chain: Putative aldehyde dehydrogenase AldA (495 aa).

Position 212–218 (212–218 (GKGSESG)) interacts with NAD(+). Catalysis depends on residues Glu256 and Cys290.

The protein belongs to the aldehyde dehydrogenase family.

It carries out the reaction an aldehyde + NAD(+) + H2O = a carboxylate + NADH + 2 H(+). In Staphylococcus aureus (strain USA300), this protein is Putative aldehyde dehydrogenase AldA (aldA).